Reading from the N-terminus, the 269-residue chain is NAD kinase (269 aa).

Asp-45 serves as the catalytic Proton acceptor. NAD(+) is bound by residues 45–46 (DG), 121–122 (NE), Arg-147, Asp-149, 160–165 (TAYNRS), and Ala-184.

It belongs to the NAD kinase family. A divalent metal cation serves as cofactor.

It localises to the cytoplasm. The enzyme catalyses NAD(+) + ATP = ADP + NADP(+) + H(+). Functionally, involved in the regulation of the intracellular balance of NAD and NADP, and is a key enzyme in the biosynthesis of NADP. Catalyzes specifically the phosphorylation on 2'-hydroxyl of the adenosine moiety of NAD to yield NADP. In Pediococcus pentosaceus (strain ATCC 25745 / CCUG 21536 / LMG 10740 / 183-1w), this protein is NAD kinase.